Reading from the N-terminus, the 250-residue chain is 4-hydroxy-tetrahydrodipicolinate reductase (250 aa).

NAD(+) contacts are provided by residues 10 to 15 (GARGRI), 78 to 80 (GTT), and 105 to 108 (APNF). His135 acts as the Proton donor/acceptor in catalysis. His136 provides a ligand contact to (S)-2,3,4,5-tetrahydrodipicolinate. Catalysis depends on Lys139, which acts as the Proton donor. 145–146 (GT) contacts (S)-2,3,4,5-tetrahydrodipicolinate. The disordered stretch occupies residues 158–177 (RAEAGSAPQPDATTTALDGA).

It belongs to the DapB family.

The protein resides in the cytoplasm. The catalysed reaction is (S)-2,3,4,5-tetrahydrodipicolinate + NAD(+) + H2O = (2S,4S)-4-hydroxy-2,3,4,5-tetrahydrodipicolinate + NADH + H(+). It catalyses the reaction (S)-2,3,4,5-tetrahydrodipicolinate + NADP(+) + H2O = (2S,4S)-4-hydroxy-2,3,4,5-tetrahydrodipicolinate + NADPH + H(+). Its pathway is amino-acid biosynthesis; L-lysine biosynthesis via DAP pathway; (S)-tetrahydrodipicolinate from L-aspartate: step 4/4. Its function is as follows. Catalyzes the conversion of 4-hydroxy-tetrahydrodipicolinate (HTPA) to tetrahydrodipicolinate. This is 4-hydroxy-tetrahydrodipicolinate reductase from Streptomyces griseus subsp. griseus (strain JCM 4626 / CBS 651.72 / NBRC 13350 / KCC S-0626 / ISP 5235).